A 975-amino-acid chain; its full sequence is Probable dipeptidyl-aminopeptidase B (975 aa).

The segment covering 1–20 (MAEHGHNMWEEEPSKGRDSL) has biased composition (basic and acidic residues). The interval 1-111 (MAEHGHNMWE…LSAASGSAGK (111 aa)) is disordered. Over 1 to 125 (MAEHGHNMWE…YRMMDRGLRR (125 aa)) the chain is Cytoplasmic. A compositionally biased stretch (low complexity) spans 22-31 (SDSSASTTSL). Residues 68-84 (LDDEDPLKDEASGDYDL) are compositionally biased toward acidic residues. Residues 126 to 146 (VLIIASLVFVTAWVGGLFIYI) traverse the membrane as a helical; Signal-anchor for type II membrane protein segment. Topologically, residues 147–975 (SHKSYLHGSE…IDNAKPQGKR (829 aa)) are vacuolar. 3 N-linked (GlcNAc...) asparagine glycosylation sites follow: N207, N397, and N622. Residue S826 is the Charge relay system of the active site. N885 carries an N-linked (GlcNAc...) asparagine glycan. Residues D903 and H936 each act as charge relay system in the active site.

Belongs to the peptidase S9B family.

The protein resides in the vacuole membrane. The catalysed reaction is Release of an N-terminal dipeptide, Xaa-Yaa-|-Zaa-, from a polypeptide, preferentially when Yaa is Pro, provided Zaa is neither Pro nor hydroxyproline.. Type IV dipeptidyl-peptidase which removes N-terminal dipeptides sequentially from polypeptides having unsubstituted N-termini provided that the penultimate residue is proline. This is Probable dipeptidyl-aminopeptidase B (DAPB) from Grosmannia clavigera (strain kw1407 / UAMH 11150) (Blue stain fungus).